We begin with the raw amino-acid sequence, 432 residues long: MIGGLKSCIEQPSLPKPSTLLPQDKACDTGGKRIFLDVQSTTPVDPRVLDAMLPFYTTVFGNPHSRTHRYGWQAEAAVEKARSQVASLIGCDPKEIIFTSGATESNNLALKGVSGFKLKEGKAAHIITLQTEHKCILDTCRNLEENGVEVTYLPVGNDGVVDIDDVKKSIKENTVLVSIGAVNSEIGTVQPLKEIGMLCKERGVLFHTDAAQGVGKIQIDVNEMNIDLLSMCAHKIYGPKGIGALYVRRRPRVRMVPLINGGGQERGLRSGTVASPLVVGFGKAAEICSKEMKRDFEHIKELSKKLKNMFKKNIEGVIINGSEKGFPGCVNVSFPFVEGESLLMHLKDIALSSGSACTSASLEPSYVLRALGRDDELAHSSIRFGIGRFTMAKEIDIVANKTVEAVQKLREMSPLYEMVKEGIDLSKISWTS.

Pyridoxal 5'-phosphate-binding positions include 102-103 (AT), Gln212, and 232-234 (CAH). Position 235 is an N6-(pyridoxal phosphate)lysine (Lys235). Thr272 contacts pyridoxal 5'-phosphate. Cys357 functions as the Cysteine persulfide intermediate in the catalytic mechanism. Cys357 serves as a coordination point for [2Fe-2S] cluster.

Belongs to the class-V pyridoxal-phosphate-dependent aminotransferase family. NifS/IscS subfamily. The cofactor is pyridoxal 5'-phosphate.

It localises to the mitosome. The catalysed reaction is (sulfur carrier)-H + L-cysteine = (sulfur carrier)-SH + L-alanine. Its function is as follows. Catalyzes the removal of elemental sulfur from cysteine to produce alanine. It supplies the inorganic sulfur for iron-sulfur (Fe-S) clusters in mitosomes. This Encephalitozoon cuniculi (strain GB-M1) (Microsporidian parasite) protein is Cysteine desulfurase, mitosomal.